Reading from the N-terminus, the 337-residue chain is Ribosomal RNA small subunit methyltransferase H (337 aa).

S-adenosyl-L-methionine-binding positions include 35-37 (GGY), Asp54, Phe81, Asp102, and Gln109. The tract at residues 286 to 316 (PVGPSEAEAAANPRARSAKLRAGERTDAPAP) is disordered. The segment covering 289-300 (PSEAEAAANPRA) has biased composition (low complexity).

Belongs to the methyltransferase superfamily. RsmH family.

It is found in the cytoplasm. The enzyme catalyses cytidine(1402) in 16S rRNA + S-adenosyl-L-methionine = N(4)-methylcytidine(1402) in 16S rRNA + S-adenosyl-L-homocysteine + H(+). Functionally, specifically methylates the N4 position of cytidine in position 1402 (C1402) of 16S rRNA. This Methylobacterium sp. (strain 4-46) protein is Ribosomal RNA small subunit methyltransferase H.